The sequence spans 892 residues: DNA ligase (892 aa).

The disordered stretch occupies residues 1-23 (MTMTNRDDSEQLAWDFDAPESDG). NAD(+) contacts are provided by residues 99 to 103 (DAAYD), 148 to 149 (SL), and glutamate 182. The active-site N6-AMP-lysine intermediate is the lysine 184. Positions 205, 244, 369, and 393 each coordinate NAD(+). The Zn(2+) site is built by cysteine 490, cysteine 493, cysteine 509, and cysteine 515. Residues 810–892 (GLPQTLAGKT…KQLLDTGTVE (83 aa)) form the BRCT domain.

Belongs to the NAD-dependent DNA ligase family. LigA subfamily. Mg(2+) serves as cofactor. Requires Mn(2+) as cofactor.

The catalysed reaction is NAD(+) + (deoxyribonucleotide)n-3'-hydroxyl + 5'-phospho-(deoxyribonucleotide)m = (deoxyribonucleotide)n+m + AMP + beta-nicotinamide D-nucleotide.. DNA ligase that catalyzes the formation of phosphodiester linkages between 5'-phosphoryl and 3'-hydroxyl groups in double-stranded DNA using NAD as a coenzyme and as the energy source for the reaction. It is essential for DNA replication and repair of damaged DNA. The polypeptide is DNA ligase (Bifidobacterium adolescentis (strain ATCC 15703 / DSM 20083 / NCTC 11814 / E194a)).